Reading from the N-terminus, the 416-residue chain is MMIKLIATPSNALVDEPVSIRATGLPPSQIVTIKATVKDENDNVFQSQAFYKTNEAGEVDLEKTPALGGDYVGVHPMGLFFSLKPKKAFHRLMKKDVMNSPFCICLDLYDSVNWLETVRIPSKASQRVQRWFVGPGVKREQIQEGRVRGALFLPPGKGPFPGIIDLFGVIGGLVEFRASLLASHGFAVLALAYFAYKDLPEKLQEVDLEYFEEAANFLLSHPKIQQPGIGVISTSKGAEIGLAMACYLKQVIATVCINGATTTTAVPLRYQDLVVTPIQQALERMEVHVSGAVCFRHTTQYLQNKNILPVEKAQGKILFIVGENDELLDSKLHAQRAMDRLRRHGRSSGRMLAYPGAGHLIEPPYSPLCFASWQPVLGRPMCFGGDLMAHAAAQEHSWREIQKFFRKHLLQSGSKL.

A Phosphoserine modification is found at S125. Active-site charge relay system residues include S235, D325, and H359. S414 carries the phosphoserine modification. Residues 414 to 416 (SKL) carry the Microbody targeting signal motif.

The protein belongs to the C/M/P thioester hydrolase family. As to expression, expressed mainly in liver and kidney with low levels in adrenal and little or no expression in other tissues.

Its subcellular location is the peroxisome. It carries out the reaction tetracosanoyl-CoA + taurine = N-tetracosanoyl-taurine + CoA + H(+). The enzyme catalyses eicosanoyl-CoA + taurine = N-eicosanoyl-taurine + CoA + H(+). The catalysed reaction is taurine + octadecanoyl-CoA = N-octadecanoyl-taurine + CoA + H(+). It catalyses the reaction taurine + hexadecanoyl-CoA = N-hexadecanoyl-taurine + CoA + H(+). It carries out the reaction tetradecanoyl-CoA + taurine = N-tetradecanoyl-taurine + CoA + H(+). The enzyme catalyses dodecanoyl-CoA + taurine = N-dodecanoyl-taurine + CoA + H(+). Functionally, acyltransferase which efficiently conjugates very long-chain and long-chain fatty acids to taurine. Shows no conjugation activity in the presence of glycine. The sequence is that of Acyl-coenzyme A amino acid N-acyltransferase 1 from Mus musculus (Mouse).